Here is a 526-residue protein sequence, read N- to C-terminus: Ferrochelatase-2, chloroplastic (526 aa).

Belongs to the ferrochelatase family.

The protein localises to the plastid. The protein resides in the chloroplast. The enzyme catalyses heme b + 2 H(+) = protoporphyrin IX + Fe(2+). It participates in porphyrin-containing compound metabolism; protoheme biosynthesis; protoheme from protoporphyrin-IX: step 1/1. Functionally, catalyzes the ferrous insertion into protoporphyrin IX. The protein is Ferrochelatase-2, chloroplastic of Oryza sativa subsp. japonica (Rice).